We begin with the raw amino-acid sequence, 204 residues long: Tat proofreading chaperone DmsD (204 aa).

Belongs to the TorD/DmsD family. DmsD subfamily.

Required for biogenesis/assembly of DMSO reductase, but not for the interaction of the DmsA signal peptide with the Tat system. May be part of a chaperone cascade complex that facilitates a folding-maturation pathway for the substrate protein. The protein is Tat proofreading chaperone DmsD of Salmonella paratyphi A (strain ATCC 9150 / SARB42).